The chain runs to 222 residues: DNA mismatch repair protein MutH (222 aa).

It belongs to the MutH family.

It is found in the cytoplasm. In terms of biological role, sequence-specific endonuclease that cleaves unmethylated GATC sequences. It is involved in DNA mismatch repair. The protein is DNA mismatch repair protein MutH of Pasteurella multocida (strain Pm70).